A 271-amino-acid chain; its full sequence is MVSKTWICGFISIITVVQALSCEKHDVLKKYQVGKFSSLTSTERDTPPSTTIEKWWINVCEEHTVEPPEDCKKNDMLCGLTDVILPGKDAITTQIIDFDKNIGFNVEETESALTLTLKGATWGANSFDAKLEFQCNDNMKQDELTSHTWADKSIQLTLKGPSGCLKSKDDDKKNGDGDNGKDGDNEGKKPAKKAGGTLWFTWLFLYALLFTLIYLMVVSFLNTRGGSFQDFRAEFIQRSTQFLTSLPEFCREVVSRILGRSTAQRGGYSAV.

Residues 1 to 19 (MVSKTWICGFISIITVVQA) form the signal peptide. Residues 20 to 166 (LSCEKHDVLK…TLKGPSGCLK (147 aa)) form the MRH domain. Over 20–197 (LSCEKHDVLK…KKPAKKAGGT (178 aa)) the chain is Lumenal. Cystine bridges form between cysteine 22–cysteine 60, cysteine 71–cysteine 78, and cysteine 135–cysteine 164. The tract at residues 161-190 (PSGCLKSKDDDKKNGDGDNGKDGDNEGKKP) is disordered. The segment covering 166 to 189 (KSKDDDKKNGDGDNGKDGDNEGKK) has biased composition (basic and acidic residues). Residues 198–218 (LWFTWLFLYALLFTLIYLMVV) form a helical membrane-spanning segment. Over 219–271 (SFLNTRGGSFQDFRAEFIQRSTQFLTSLPEFCREVVSRILGRSTAQRGGYSAV) the chain is Cytoplasmic.

It belongs to the ATG27 family. As to quaternary structure, forms a complex with ATG9 and ATG23.

The protein localises to the cytoplasmic vesicle membrane. The protein resides in the golgi apparatus membrane. It localises to the mitochondrion membrane. Its subcellular location is the preautophagosomal structure membrane. In terms of biological role, effector of VPS34 phosphatidylinositol 3-phosphate kinase signaling. Regulates the cytoplasm to vacuole transport (Cvt) vesicle formation. Plays a role in ATG protein retrieval from the pre-autophagosomal structure (PAS) and is especially required for autophagy-dependent cycling of ATG9. This chain is Autophagy-related protein 27 (ATG27), found in Saccharomyces cerevisiae (strain YJM789) (Baker's yeast).